The primary structure comprises 352 residues: MGSNFHYTIDLNEDQNHQPFFASLGSSLHHHLQQQQQQQQHFHHQASSNPSSLMSPSLSYFPFLINSRQDQVYVGYNNNTFHDVLDTHISQPLETKNFVSDGGSSSSDQMVPKKETRLKLTIKKKDNHQDQTDLPQSPIKDMTGTNSLKWISSKVRLMKKKKAIITTSDSSKQHTNNDQSSNLSNSERQNGYNNDCVIRICSDCNTTKTPLWRSGPRGPKSLCNACGIRQRKARRAAMATATATAVSGVSPPVMKKKMQNKNKISNGVYKILSPLPLKVNTCKRMITLEETALAEDLETQSNSTMLSSSDNIYFDDLALLLSKSSAYQQVFPQDEKEAAILLMALSHGMVHG.

The segment at 27 to 53 is disordered; sequence SLHHHLQQQQQQQQHFHHQASSNPSSL. Low complexity predominate over residues 33–53; that stretch reads QQQQQQQQHFHHQASSNPSSL. Positions 112–119 match the Nuclear localization signal motif; that stretch reads PKKETRLK. The interval 163–189 is disordered; it reads AIITTSDSSKQHTNNDQSSNLSNSERQ. The segment covering 165–189 has biased composition (polar residues); the sequence is ITTSDSSKQHTNNDQSSNLSNSERQ. Residues 195–249 form a GATA-type zinc finger; that stretch reads DCVIRICSDCNTTKTPLWRSGPRGPKSLCNACGIRQRKARRAAMATATATAVSGV.

Belongs to the type IV zinc-finger family. Class B subfamily. In terms of assembly, forms heterodimers with GATA18. As to expression, expressed predominantly in leaves, and barely in stems, flowers and siliques.

It is found in the nucleus. Its function is as follows. Transcriptional regulator that specifically binds 5'-GATA-3' or 5'-GAT-3' motifs within gene promoters. Involved in the modulation of chloroplast development, growth and division in a cytokinin-dependent manner. Repressor of the gibberellic acid (GA) signaling pathway that regulates flowering and modulates greening, in a SOC1-dependent manner. Prevents the accumulation of SOC1 during flowering. Promotes chlorophyll biosynthesis throughout the plant, by regulating chlorophyll biosynthetic genes (e.g. HEMA1 and GUN4) and chloroplast localized glutamate synthase (e.g. GLU1). Involved in the regulation of sugar-sensing genes (e.g. HXK1, HXK2, STP13 and PLT6). Regulator of germination, senescence, elongation growth and flowering time. Influences also leaf starch content. The protein is Putative GATA transcription factor 22 of Arabidopsis thaliana (Mouse-ear cress).